Here is a 192-residue protein sequence, read N- to C-terminus: Akirin-1 (192 aa).

A disordered region spans residues 17–71 (LLSPGSPKRRRCAPLPGPTPGLRPPDAEPPPPFQTQTPPQSLQQPAPPGSERRLP). Serine 22 carries the phosphoserine modification. The Nuclear localization signal motif lies at 23 to 28 (PKRRRC). Residues 31 to 49 (LPGPTPGLRPPDAEPPPPF) are compositionally biased toward pro residues. The span at 50 to 60 (QTQTPPQSLQQ) shows a compositional bias: low complexity. Position 72 is a phosphothreonine (threonine 72). Residues 104 to 122 (ASESQPHSSALTAPSSPGS) show a composition bias toward polar residues. The disordered stretch occupies residues 104 to 127 (ASESQPHSSALTAPSSPGSSWMKK). The SYVS motif motif lies at 189–192 (SYVS).

It belongs to the akirin family. Widely expressed with the highest expression in heart, liver, placenta and peripheral blood leukocytes.

Its subcellular location is the nucleus. Molecular adapter that acts as a bridge between proteins, and which is involved skeletal muscle development. Functions as a signal transducer for MSTN during skeletal muscle regeneration and myogenesis. May regulate chemotaxis of both macrophages and myoblasts by reorganising actin cytoskeleton, leading to more efficient lamellipodia formation via a PI3 kinase dependent pathway. In contrast to AKIRIN2, not involved in nuclear import of proteasomes. The polypeptide is Akirin-1 (Homo sapiens (Human)).